The primary structure comprises 104 residues: Large ribosomal subunit protein uL24 (104 aa).

Belongs to the universal ribosomal protein uL24 family. Part of the 50S ribosomal subunit.

Its function is as follows. One of two assembly initiator proteins, it binds directly to the 5'-end of the 23S rRNA, where it nucleates assembly of the 50S subunit. In terms of biological role, one of the proteins that surrounds the polypeptide exit tunnel on the outside of the subunit. This Bartonella bacilliformis (strain ATCC 35685 / KC583 / Herrer 020/F12,63) protein is Large ribosomal subunit protein uL24.